A 546-amino-acid chain; its full sequence is Probable protein kinase UbiB (546 aa).

The region spanning 124-502 (DFDIKPLASA…RVRQGQSRYL (379 aa)) is the Protein kinase domain. Residues 130–138 (LASASIAQV) and K153 each bind ATP. Residue D288 is the Proton acceptor of the active site. Transmembrane regions (helical) follow at residues 501 to 521 (YLFGIGATLLLSGTLLLINRP) and 522 to 542 (DWQMMPAWLMAGGLVVWLIGW).

This sequence belongs to the ABC1 family. UbiB subfamily.

The protein resides in the cell inner membrane. The protein operates within cofactor biosynthesis; ubiquinone biosynthesis [regulation]. In terms of biological role, is probably a protein kinase regulator of UbiI activity which is involved in aerobic coenzyme Q (ubiquinone) biosynthesis. The chain is Probable protein kinase UbiB from Enterobacter sp. (strain 638).